A 359-amino-acid polypeptide reads, in one-letter code: MNIYDQLQAVEDRYEELGELLSDPDVVSDTKRFMELSKEEASNRDTVIAYREYKQVLQNIVDAEEMIKESGGDADLEEMAKQELKDAKAEKEEYEEKLKILLLPKDPNDDKNIILEIRGAAGGDEAALFAGDLLTMYQKYAEAQGWRFEVMEASMNGVGGFKEVVAMVSGQSVYSKLKYESGAHRVQRVPVTESQGRVHTSTATVLVMPEVEEVEXDIDPKDLRVDIYHASGAGGQNVNKVATAVRIVHLPTNIKVEMQEERTQQKNREKAMKIIRARVADHFAQIAQDEQDAERKSTIGTGDRSERIRTYNFPQNRVTDHRIGLTLQKLDTILSGKLDEVVDALVLYDQTQKLEELNK.

Residue glutamine 236 is modified to N5-methylglutamine.

Belongs to the prokaryotic/mitochondrial release factor family. Methylated by PrmC. Methylation increases the termination efficiency of RF1.

Its subcellular location is the cytoplasm. Functionally, peptide chain release factor 1 directs the termination of translation in response to the peptide chain termination codons UAG and UAA. The protein is Peptide chain release factor 1 of Streptococcus pneumoniae serotype 19F (strain G54).